Here is a 1081-residue protein sequence, read N- to C-terminus: DNA polymerase delta catalytic subunit (1081 aa).

The tract at residues 1 to 22 (MTSKRPGGSSFQPEVKRKRESD) is disordered. Residues Cys981, Cys984, Cys998, and Cys1001 each coordinate Zn(2+). The CysA-type zinc finger occupies 981-1001 (CLGCKSVLPRAESENAVCKHC). 4 residues coordinate [4Fe-4S] cluster: Cys1030, Cys1033, Cys1043, and Cys1048. A CysB motif motif is present at residues 1030-1048 (CQNCAKTMQDKVNCSARDC).

This sequence belongs to the DNA polymerase type-B family. As to quaternary structure, heterodimer with subunits of 125 kDa and 50 kDa. The 125 kDa subunit contains the polymerase active site and most likely the active site for the 3'-5' exonuclease activity. [4Fe-4S] cluster serves as cofactor.

The protein localises to the nucleus. The enzyme catalyses DNA(n) + a 2'-deoxyribonucleoside 5'-triphosphate = DNA(n+1) + diphosphate. Functionally, possesses two enzymatic activities: DNA synthesis (polymerase) and an exonucleolytic activity that degrades single stranded DNA in the 3'- to 5'-direction. Required with its accessory proteins (proliferating cell nuclear antigen (PCNA) and replication factor C (RFC) or activator 1) for leading strand synthesis. Also involved in completing Okazaki fragments initiated by the DNA polymerase alpha/primase complex. In Caenorhabditis elegans, this protein is DNA polymerase delta catalytic subunit.